The following is a 391-amino-acid chain: Saxitoxin and tetrodotoxin-binding protein 1 (391 aa).

Positions 1–20 are cleaved as a signal peptide; sequence MGAVPGVVLLLMLAVLGIRA. 2 tandem repeats follow at residues 24–202 and 203–391. N-linked (GlcNAc...) asparagine glycans are attached at residues Asn54, Asn63, Asn97, Asn234, Asn268, Asn277, and Asn307.

Homodimer or heterodimer of PSTBP1 and PSTBP2. In terms of processing, glycosylated.

It localises to the secreted. Binds both saxitoxin and tetradotoxin. May play a role in toxin accumulation and/or excretion. This Takifugu pardalis (Panther puffer) protein is Saxitoxin and tetrodotoxin-binding protein 1 (psbp1).